The primary structure comprises 97 residues: Protein RALF-like 2 (97 aa).

Positions 1–25 are cleaved as a signal peptide; that stretch reads MEARHMLVTILLLSFVFMNIMKVEA. 2 disulfide bridges follow: cysteine 42-cysteine 49 and cysteine 61-cysteine 67.

It belongs to the plant rapid alkalinization factor (RALF) family.

It is found in the secreted. Cell signaling peptide that may regulate plant stress, growth, and development. Mediates a rapid alkalinization of extracellular space by mediating a transient increase in the cytoplasmic Ca(2+) concentration leading to a calcium-dependent signaling events through a cell surface receptor and a concomitant activation of some intracellular mitogen-activated protein kinases. In Arabidopsis thaliana (Mouse-ear cress), this protein is Protein RALF-like 2 (RALFL2).